A 456-amino-acid polypeptide reads, in one-letter code: Gustatory receptor for sugar taste 64a (456 aa).

The interval 1 to 30 is disordered; the sequence is MKGPNLNFRKTPSKDNGVKQVESLARPETP. The Cytoplasmic portion of the chain corresponds to 1-91; it reads MKGPNLNFRK…RESNPRRVRF (91 aa). A helical transmembrane segment spans residues 92–114; the sequence is AYKSIPMFVTLIFMIATSILFLS. Over 115 to 128 the chain is Extracellular; that stretch reads MFTHLLKIGITAKN. The chain crosses the membrane as a helical span at residues 129 to 150; the sequence is FVGLVFFGCVLSAYVVFIRLAK. Gly131 lines the sucrose pocket. Over 151–182 the chain is Cytoplasmic; the sequence is KWPAVVRIWTRTEIPFTKPPYEIPKRNLSRRV. A helical membrane pass occupies residues 183–205; that stretch reads QLAALAIIGLSLGEHALYQVSAI. Residues Glu196, His197, and Tyr234 each coordinate sucrose. Residues Glu196, His197, Tyr234, Asn253, and Thr257 each contribute to the D-maltose site. Topologically, residues 206–245 are extracellular; sequence LSYTRRIQMCANITTVPSFNNYMQTNYDYVFQLLPYSPII. Residues 246–271 form a helical membrane-spanning segment; it reads AVLILLINGACTFVWNYMDLFIMMIS. Thr257 is a binding site for sucrose. Over 272 to 318 the chain is Cytoplasmic; the sequence is KGLSYRFEQITTRIRKLEHEEVCESVFIQIREHYVKMCELLEFVDSA. A helical membrane pass occupies residues 319–342; it reads MSSLILLSCVNNLYFVCYQLLNVF. Over 343–350 the chain is Extracellular; sequence NKLRWPIN. A helical transmembrane segment spans residues 351–373; it reads YIYFWYSLLYLIGRTAFVFLTAA. Tyr353 provides a ligand contact to sucrose. Residue Tyr353 coordinates D-maltose. At 374-421 the chain is on the cytoplasmic side; sequence DINEESKRGLGVLRRVSSRSWCVEVERLIFQMTTQTVALSGKKFYFLT. The chain crosses the membrane as a helical span at residues 422-441; it reads RRLLFGMAGTIVTYELVLLQ. Residues 442–456 lie on the Extracellular side of the membrane; the sequence is FDEPNRRKGLQPLCA.

Belongs to the insect chemoreceptor superfamily. Gustatory receptor (GR) family. Gr5a subfamily. In terms of assembly, homotetramer. As to expression, expressed in Gr5a-expressing sugar-sensing cells.

Its subcellular location is the cell membrane. Functionally, one of the few identified sugar gustatory receptors identified so far and which promotes the starvation-induced increase of feeding motivation. Required in combination with Gr64f to detect sucrose, maltose, and glucose. This Drosophila melanogaster (Fruit fly) protein is Gustatory receptor for sugar taste 64a (Gr64a).